The chain runs to 287 residues: Protease HtpX (287 aa).

Helical transmembrane passes span Ile4–Ile24 and Gly33–Ile53. Zn(2+) is bound at residue His139. Glu140 is an active-site residue. His143 is a binding site for Zn(2+). Helical transmembrane passes span Leu154 to Ile174 and Ala195 to Phe215. Glu220 is a Zn(2+) binding site.

The protein belongs to the peptidase M48B family. Zn(2+) is required as a cofactor.

It is found in the cell inner membrane. In Shewanella sp. (strain MR-4), this protein is Protease HtpX.